A 543-amino-acid polypeptide reads, in one-letter code: Serine/threonine-protein kinase Chk2 (543 aa).

Residues 1-66 (MSRESDVEAQ…SGTLSSLETV (66 aa)) form a disordered region. A compositionally biased stretch (polar residues) spans 8-22 (EAQQSHGSSACSQPH). A compositionally biased stretch (low complexity) spans 23-62 (GSVTQSQGSSSQSQGISSSSTSTMPNSSQSSHSSSGTLSS). Residue serine 62 is modified to Phosphoserine; by PLK3. Residue threonine 68 is modified to Phosphothreonine; by ATM and MAP3K20. Serine 73 carries the phosphoserine; by PLK3 modification. An FHA domain is found at 113-175 (YWFGRDKSCE…NGTFVNTELV (63 aa)). One can recognise a Protein kinase domain in the interval 220–486 (YIMSKTLGSG…TEEALRHPWL (267 aa)). ATP is bound by residues 227–234 (GSGACGEV), lysine 249, and 302–308 (ELMEGGE). Aspartate 347 acts as the Proton acceptor in catalysis. Residues 351-352 (EN) and aspartate 368 contribute to the ATP site. Positions 368–394 (DFGHSKILGETSLMRTLCGTPTYLAPE) are T-loop/activation segment. Serine 379 is subject to Phosphoserine; by autocatalysis. Phosphothreonine; by autocatalysis occurs at positions 383 and 387. Serine 456 carries the phosphoserine modification. A compositionally biased stretch (polar residues) spans 506–517 (TALPQVLAQPST). The segment at 506–538 (TALPQVLAQPSTSRKRPREGEAEGAETTKRPAV) is disordered. Positions 523-534 (REGEAEGAETTK) are enriched in basic and acidic residues.

This sequence belongs to the protein kinase superfamily. CAMK Ser/Thr protein kinase family. CHK2 subfamily. As to quaternary structure, homodimer. Homodimerization is part of the activation process but the dimer may dissociate following activation. Interacts with PML. Interacts with TP53. Interacts with RB1; phosphorylates RB1. Interacts with BRCA1. Interacts (phosphorylated at Thr-68) with MDC1; requires ATM-mediated phosphorylation of CHEK2. Interacts with TP53BP1; modulates CHEK2 phosphorylation at Thr-68 in response to ionizing radiation. Interacts with CDC25A; phosphorylates CDC25A and mediates its degradation in response to ionizing radiation. Interacts with CUL1; mediates CHEK2 ubiquitination and regulation. Interacts with CDKN2AIP. Interacts (via protein kinase domain) with CCAR2 (via N-terminus). Interacts with SIRT1. Mg(2+) is required as a cofactor. Post-translationally, phosphorylated. Phosphorylated at Ser-73 by PLK3 in response to DNA damage, promoting phosphorylation at Thr-68 by ATM and the G2/M transition checkpoint. Phosphorylation at Thr-68 induces homodimerization. Autophosphorylates at Thr-383 and Thr-387 in the T-loop/activation segment upon dimerization to become fully active and phosphorylate its substrates like for instance CDC25C. DNA damage-induced autophosphorylation at Ser-379 induces CUL1-mediated ubiquitination and regulates the pro-apoptotic function. Phosphorylation at Ser-456 also regulates ubiquitination. Phosphorylated by PLK4. Ubiquitinated. CUL1-mediated ubiquitination regulates the pro-apoptotic function. Ubiquitination may also regulate protein stability. Ubiquitinated by RNF8 via 'Lys-48'-linked ubiquitination. As to expression, high expression is found in testis, spleen, colon and peripheral blood leukocytes. Low expression is found in other tissues.

Its subcellular location is the nucleus. The protein resides in the PML body. The protein localises to the nucleoplasm. It catalyses the reaction L-seryl-[protein] + ATP = O-phospho-L-seryl-[protein] + ADP + H(+). It carries out the reaction L-threonyl-[protein] + ATP = O-phospho-L-threonyl-[protein] + ADP + H(+). Activated through phosphorylation at Thr-68 by ATM in response to DNA double-strand breaks. Activation is modulated by several mediators including MDC1 and TP53BP1. Induces homodimerization with exchange of the T-loop/activation segment between protomers and transphosphorylation of the protomers. The autophosphorylated kinase dimer is fully active. Negatively regulated by PPM1D through dephosphorylation of Thr-68. Functionally, serine/threonine-protein kinase which is required for checkpoint-mediated cell cycle arrest, activation of DNA repair and apoptosis in response to the presence of DNA double-strand breaks. May also negatively regulate cell cycle progression during unperturbed cell cycles. Following activation, phosphorylates numerous effectors preferentially at the consensus sequence [L-X-R-X-X-S/T]. Regulates cell cycle checkpoint arrest through phosphorylation of CDC25A, CDC25B and CDC25C, inhibiting their activity. Inhibition of CDC25 phosphatase activity leads to increased inhibitory tyrosine phosphorylation of CDK-cyclin complexes and blocks cell cycle progression. May also phosphorylate NEK6 which is involved in G2/M cell cycle arrest. Regulates DNA repair through phosphorylation of BRCA2, enhancing the association of RAD51 with chromatin which promotes DNA repair by homologous recombination. Also stimulates the transcription of genes involved in DNA repair (including BRCA2) through the phosphorylation and activation of the transcription factor FOXM1. Regulates apoptosis through the phosphorylation of p53/TP53, MDM4 and PML. Phosphorylation of p53/TP53 at 'Ser-20' by CHEK2 may alleviate inhibition by MDM2, leading to accumulation of active p53/TP53. Phosphorylation of MDM4 may also reduce degradation of p53/TP53. Also controls the transcription of pro-apoptotic genes through phosphorylation of the transcription factor E2F1. Tumor suppressor, it may also have a DNA damage-independent function in mitotic spindle assembly by phosphorylating BRCA1. Its absence may be a cause of the chromosomal instability observed in some cancer cells. Promotes the CCAR2-SIRT1 association and is required for CCAR2-mediated SIRT1 inhibition. Under oxidative stress, promotes ATG7 ubiquitination by phosphorylating the E3 ubiquitin ligase TRIM32 at 'Ser-55' leading to positive regulation of the autophagosme assembly. In terms of biological role, (Microbial infection) Phosphorylates herpes simplex virus 1/HHV-1 protein ICP0 and thus activates its SUMO-targeted ubiquitin ligase activity. The protein is Serine/threonine-protein kinase Chk2 of Homo sapiens (Human).